Consider the following 1311-residue polypeptide: Mitogen-activated protein kinase kinase kinase 19 (1311 aa).

Disordered regions lie at residues 85–119 (PDPL…SPPD), 250–274 (PLSQ…PVEH), 330–363 (SVKE…YLSS), 396–472 (MTPA…NPEM), 486–508 (EGTS…PAQN), 576–607 (HRPH…KQAF), and 734–767 (SKDK…FLSS). Residues 250-261 (PLSQSAEFSSSK) show a composition bias toward polar residues. 3 stretches are compositionally biased toward basic and acidic residues: residues 262–274 (NHQE…PVEH), 330–345 (SVKE…RDSG), and 450–464 (LEGH…KIPM). The segment covering 734 to 748 (SKDKGCKDMGGHTED) has biased composition (basic and acidic residues). Residues 1044 to 1307 (WTKGEILGRG…ALQLLKHSFL (264 aa)) form the Protein kinase domain. ATP-binding positions include 1050–1058 (LGRGAYGTV) and Lys1072. Asp1169 (proton acceptor) is an active-site residue.

Belongs to the protein kinase superfamily. STE Ser/Thr protein kinase family. STE20 subfamily.

It carries out the reaction L-seryl-[protein] + ATP = O-phospho-L-seryl-[protein] + ADP + H(+). The enzyme catalyses L-threonyl-[protein] + ATP = O-phospho-L-threonyl-[protein] + ADP + H(+). The chain is Mitogen-activated protein kinase kinase kinase 19 (Map3k19) from Mus musculus (Mouse).